The sequence spans 313 residues: E3 ubiquitin-protein ligase siah2 (313 aa).

Positions 1-49 (MSRPSSAGPCASKPCGKQKQPPPPPPHAPSLPATISGGPGASAPPAPTA) are disordered. Positions 20–29 (QPPPPPPHAP) are enriched in pro residues. The segment at 69-104 (CPVCFDYVLPPILQCQAGHLVCNQCRQKLSCCPTCR) adopts an RING-type zinc-finger fold. The segment at 119 to 311 (VASAVLFPCK…LGINVTISTC (193 aa)) is SBD. The segment at 122–182 (AVLFPCKYAS…VMQHLTHSHK (61 aa)) adopts an SIAH-type zinc-finger fold. Zn(2+) is bound by residues Cys127, Cys134, His146, Cys150, Cys157, Cys164, His176, and His181.

Belongs to the SINA (Seven in absentia) family. In terms of assembly, homodimer. In terms of tissue distribution, widely expressed in early embryos until stage 40. It is then expressed in brain, spinal cord and in the developing and mature eye.

Its subcellular location is the cytoplasm. The enzyme catalyses S-ubiquitinyl-[E2 ubiquitin-conjugating enzyme]-L-cysteine + [acceptor protein]-L-lysine = [E2 ubiquitin-conjugating enzyme]-L-cysteine + N(6)-ubiquitinyl-[acceptor protein]-L-lysine.. Its pathway is protein modification; protein ubiquitination. E3 ubiquitin-protein ligase that mediates ubiquitination and subsequent proteasomal degradation of target proteins. E3 ubiquitin ligases accept ubiquitin from an E2 ubiquitin-conjugating enzyme in the form of a thioester and then directly transfers the ubiquitin to targeted substrates. Involved in eye morphogenesis, probably triggers the ubiquitin-mediated degradation of different substrates. May play a role in the regulation of the cellular clock function. The chain is E3 ubiquitin-protein ligase siah2 (siah2) from Xenopus laevis (African clawed frog).